The primary structure comprises 193 residues: MADIRLIVGLGNPGPEYENTRHNAGEWFLNQLADTYNAPLKPETKFFGKTARITIDGKDIRLLYPTTFMNKSGQAVAALANFYRIEPEQILVAFDELDLPPGVAKYKVGGSSSQNGVRDIVARMGNNKNFLRLRIGIGHPGHKSRVTGHVLGKPSAEEKTAIESAIDEAVRCTEILLKEDLKQAQNRLHSHKV.

Tyr17 contributes to the tRNA binding site. His22 acts as the Proton acceptor in catalysis. The tRNA site is built by Phe68, Asn70, and Asn115.

Belongs to the PTH family. In terms of assembly, monomer.

It localises to the cytoplasm. It catalyses the reaction an N-acyl-L-alpha-aminoacyl-tRNA + H2O = an N-acyl-L-amino acid + a tRNA + H(+). Functionally, hydrolyzes ribosome-free peptidyl-tRNAs (with 1 or more amino acids incorporated), which drop off the ribosome during protein synthesis, or as a result of ribosome stalling. Catalyzes the release of premature peptidyl moieties from peptidyl-tRNA molecules trapped in stalled 50S ribosomal subunits, and thus maintains levels of free tRNAs and 50S ribosomes. The polypeptide is Peptidyl-tRNA hydrolase (Alteromonas mediterranea (strain DSM 17117 / CIP 110805 / LMG 28347 / Deep ecotype)).